A 90-amino-acid chain; its full sequence is MERYPGSVMLEYMTVTAGGVNTVQITYGTEDSGNSVFQWYVNKLKSEGWEVMTSTSEGQYFVGGSKGSSYIQVEITEEAFTKISVTYTSS.

This is an uncharacterized protein from Archaeoglobus fulgidus (strain ATCC 49558 / DSM 4304 / JCM 9628 / NBRC 100126 / VC-16).